We begin with the raw amino-acid sequence, 67 residues long: DNA-directed RNA polymerase subunit omega (67 aa).

This sequence belongs to the RNA polymerase subunit omega family. As to quaternary structure, the RNAP catalytic core consists of 2 alpha, 1 beta, 1 beta' and 1 omega subunit. When a sigma factor is associated with the core the holoenzyme is formed, which can initiate transcription.

The enzyme catalyses RNA(n) + a ribonucleoside 5'-triphosphate = RNA(n+1) + diphosphate. Functionally, promotes RNA polymerase assembly. Latches the N- and C-terminal regions of the beta' subunit thereby facilitating its interaction with the beta and alpha subunits. In Methylibium petroleiphilum (strain ATCC BAA-1232 / LMG 22953 / PM1), this protein is DNA-directed RNA polymerase subunit omega.